Consider the following 397-residue polypeptide: Chorismate synthase (397 aa).

The NADP(+) site is built by Arg-40 and Arg-46. Residues 129-131, 257-258, Gly-302, 317-321, and Arg-343 contribute to the FMN site; these read RSS, QA, and KPISS.

The protein belongs to the chorismate synthase family. In terms of assembly, homotetramer. Requires FMNH2 as cofactor.

It carries out the reaction 5-O-(1-carboxyvinyl)-3-phosphoshikimate = chorismate + phosphate. It participates in metabolic intermediate biosynthesis; chorismate biosynthesis; chorismate from D-erythrose 4-phosphate and phosphoenolpyruvate: step 7/7. Functionally, catalyzes the anti-1,4-elimination of the C-3 phosphate and the C-6 proR hydrogen from 5-enolpyruvylshikimate-3-phosphate (EPSP) to yield chorismate, which is the branch point compound that serves as the starting substrate for the three terminal pathways of aromatic amino acid biosynthesis. This reaction introduces a second double bond into the aromatic ring system. The protein is Chorismate synthase of Chlorobium luteolum (strain DSM 273 / BCRC 81028 / 2530) (Pelodictyon luteolum).